Consider the following 490-residue polypeptide: Vacuolar amino acid transporter 7 (490 aa).

The Cytoplasmic portion of the chain corresponds to 1–6; it reads MEATSS. Residues 7–27 form a helical membrane-spanning segment; that stretch reads ALSSTANLVKTIVGAGTLAIP. Topologically, residues 28–34 are vacuolar; that stretch reads YSFKSDG. A helical membrane pass occupies residues 35–55; sequence VLVGVILTLLAAVTSGLGLFV. Residues 56–84 are Cytoplasmic-facing; sequence LSKCSKTLINPRNSSFFTLCMLTYPTLAP. A helical membrane pass occupies residues 85–105; sequence IFDLAMIVQCFGVGLSYLVLI. Over 106–108 the chain is Vacuolar; sequence GDL. The chain crosses the membrane as a helical span at residues 109 to 129; the sequence is FPGLFGGERNYWIIASAVIII. The Cytoplasmic segment spans residues 130 to 143; that stretch reads PLCLVKKLDQLKYS. The helical transmembrane segment at 144-164 threads the bilayer; it reads SILGLFALAYISILVFSHFVF. At 165–190 the chain is on the vacuolar side; the sequence is ELGKGELTNILRNDICWWKIHDFKGL. The chain crosses the membrane as a helical span at residues 191-211; sequence LSTFSIIIFAFTGSMNLFPMI. Residues 212–221 are Cytoplasmic-facing; sequence NELKDNSMEN. A helical membrane pass occupies residues 222–242; it reads ITFVINNSISLSTALFLIVGL. Residues 243–264 are Vacuolar-facing; the sequence is SGYLTFGNETLGNLMLNYDPNS. A helical transmembrane segment spans residues 265–285; the sequence is IWIVIGKFCLGSMLILSFPLL. Topologically, residues 286 to 397 are cytoplasmic; it reads FHPLRIAVNN…FVKSRFYWIT (112 aa). The disordered stretch occupies residues 355–374; it reads NGNFDNGSIESQENNNDERG. The segment covering 357–368 has biased composition (polar residues); the sequence is NFDNGSIESQEN. A helical membrane pass occupies residues 398–418; it reads ALLLISMYTLALSVQSFALVL. At 419 to 428 the chain is on the vacuolar side; that stretch reads SFVGATGSTS. A helical transmembrane segment spans residues 429–449; it reads ISFTLPGLLGYKLIGLDSLAI. At 450–463 the chain is on the cytoplasmic side; it reads GKMIPPKDRFYKRC. The helical transmembrane segment at 464 to 484 threads the bilayer; it reads SLLLVFYGLSVMFLSLYVTVF. Residues 485–490 lie on the Vacuolar side of the membrane; that stretch reads NRSDEA.

It belongs to the amino acid/polyamine transporter 2 family.

The protein resides in the vacuole membrane. Its function is as follows. Probable amino acid transporter of unknown specificity. The polypeptide is Vacuolar amino acid transporter 7 (AVT7) (Saccharomyces cerevisiae (strain ATCC 204508 / S288c) (Baker's yeast)).